Here is a 324-residue protein sequence, read N- to C-terminus: Antihemorrhagic factor cMSF (324 aa).

An N-terminal signal peptide occupies residues 1–19 (MHFLVALVLLGQIIGSTLS). 2 consecutive Cystatin fetuin-A-type domains span residues 22–130 (VRGD…VKCH) and 141–254 (RNCL…SDCV). The Cell attachment site signature appears at 23 to 25 (RGD). Intrachain disulfides connect Cys28/Cys315, Cys85/Cys96, Cys110/Cys129, Cys143/Cys146, Cys205/Cys217, Cys230/Cys253, and Cys287/Cys291. Residue Asn204 is glycosylated (N-linked (GlcNAc...) asparagine). The N-linked (GlcNAc...) asparagine glycan is linked to Asn282.

In terms of assembly, homodimer. Expressed by the liver.

The protein localises to the secreted. Suppress hemorrhage induced by metalloproteinases from the same venom (brevilysin-H3, -H4, -H6) and from habu venom (metalloproteinases HR1A and HR1B). The non-hemorrhagic brevilysin-L4 is not inhibited by cMSF. Does not inhibit serine and cysteine proteases such as trypsin, chymotrypsin, thermolysin, and papain. The inhibition may occur by formation of a non-covalent complex between this protein and the proteinases at their metalloproteinase domains. In Gloydius brevicauda (Korean slamosa snake), this protein is Antihemorrhagic factor cMSF.